Here is a 590-residue protein sequence, read N- to C-terminus: Kinetochore protein ndc-80 (590 aa).

Coiled coils occupy residues 269 to 342 (KGNE…KQIH) and 450 to 525 (ELET…MKLD).

The protein belongs to the NDC80/HEC1 family. In terms of assembly, component of the NDC80 complex, which is composed of at least ndc-80 and him-10. The NDC80 complex interacts with knl-1. Interacts with the RZZ complex components rod-1 (via N-terminus) and zwl-1.

The protein resides in the nucleus. The protein localises to the chromosome. Its subcellular location is the centromere. It localises to the kinetochore. It is found in the cytoplasm. The protein resides in the cytoskeleton. In terms of biological role, acts as a component of the essential kinetochore-associated ndc-80 complex, which is required for chromosome segregation in mitosis and meiosis and spindle checkpoint activity. Plays a role in kinetochore assembly and recruits the checkpoint protein mdf-2 and the spindly-like protein spdl-1 to unattached kinetochores. Mediates the formation of end-on kinetochore-microtubule attachments through recruitment of spdl-1. The ndc-80 complex synergistically enhances the affinity of the ska-1 complex for microtubules and may allow the ndc-80 complex to track depolymerizing microtubules. The polypeptide is Kinetochore protein ndc-80 (ndc-80) (Caenorhabditis elegans).